A 1022-amino-acid polypeptide reads, in one-letter code: Dihydropyrimidine dehydrogenase [NADP(+)] (1022 aa).

Residues 26–45 (ANVHSTASKKNEKKHWKRNP) form a disordered region. Positions 69-100 (ERGALREALRCLKCADAPCQKSCPTNLDIKSF) constitute a 4Fe-4S ferredoxin-type 1 domain. [4Fe-4S] cluster-binding residues include C79, C82, C87, and C91. V129 contacts FAD. 4 residues coordinate [4Fe-4S] cluster: C130, C136, C140, and Q156. Residues 194 to 198 (GCGPA), 218 to 226 (EKQKYIGGL), R235, and L261 each bind FAD. Residues 340–343 (AGDT), 364–365 (RK), R371, 437–439 (AFG), and 481–487 (DIAGFAN) each bind NADP(+). An FAD-binding site is contributed by 480 to 489 (GDIAGFANTT). Residues S550 and 574–575 (KT) contribute to the FMN site. Residues N609 and 668–670 (NLS) each bind substrate. The active-site Proton acceptor is C671. Residue K709 participates in FMN binding. 736–737 (NT) serves as a coordination point for substrate. Residues G767, 793–795 (TGG), and 816–817 (CS) each bind FMN. 2 consecutive 4Fe-4S ferredoxin-type domains span residues 943 to 975 (VQAL…FDPE) and 976 to 1006 (THLP…MVSR). The [4Fe-4S] cluster site is built by C952, C955, C958, C962, C985, C988, C991, and C995.

Belongs to the dihydropyrimidine dehydrogenase family. As to quaternary structure, homodimer. FAD serves as cofactor. The cofactor is FMN. Requires [4Fe-4S] cluster as cofactor.

It is found in the cytoplasm. It catalyses the reaction 5,6-dihydrouracil + NADP(+) = uracil + NADPH + H(+). The enzyme catalyses 5,6-dihydrothymine + NADP(+) = thymine + NADPH + H(+). It functions in the pathway amino-acid biosynthesis; beta-alanine biosynthesis. Functionally, involved in pyrimidine base degradation. Catalyzes the reduction of uracil and thymine. Also involved the degradation of the chemotherapeutic drug 5-fluorouracil. The chain is Dihydropyrimidine dehydrogenase [NADP(+)] (dpyd) from Danio rerio (Zebrafish).